We begin with the raw amino-acid sequence, 196 residues long: Orotate phosphoribosyltransferase (196 aa).

Glu-117–Ser-125 is a binding site for 5-phospho-alpha-D-ribose 1-diphosphate. Orotate contacts are provided by Thr-121 and Arg-149.

The protein belongs to the purine/pyrimidine phosphoribosyltransferase family. PyrE subfamily. Homodimer. Mg(2+) is required as a cofactor.

The enzyme catalyses orotidine 5'-phosphate + diphosphate = orotate + 5-phospho-alpha-D-ribose 1-diphosphate. It participates in pyrimidine metabolism; UMP biosynthesis via de novo pathway; UMP from orotate: step 1/2. Catalyzes the transfer of a ribosyl phosphate group from 5-phosphoribose 1-diphosphate to orotate, leading to the formation of orotidine monophosphate (OMP). The chain is Orotate phosphoribosyltransferase from Sphingopyxis alaskensis (strain DSM 13593 / LMG 18877 / RB2256) (Sphingomonas alaskensis).